A 629-amino-acid polypeptide reads, in one-letter code: Dolichyl-diphosphooligosaccharide--protein glycosyltransferase subunit 2 (629 aa).

A signal peptide spans 1–22 (MAPPGSRTVLLLALTIIARTQA). Residues 23 to 541 (LKPTHYLTKH…RDPEKRPPTV (519 aa)) are Lumenal-facing. Asn-106 carries N-linked (GlcNAc...) asparagine glycosylation. Lys-154 is covalently cross-linked (Glycyl lysine isopeptide (Lys-Gly) (interchain with G-Cter in ubiquitin)). A helical transmembrane segment spans residues 542 to 562 (VSNTFTGLILSPLLLLFALWI). Over 563–570 (RIGAKISN) the chain is Cytoplasmic. A helical transmembrane segment spans residues 571–591 (FTFGLTIIFHLGHAMLAMYVY). The Lumenal segment spans residues 592–594 (WTQ). The helical transmembrane segment at 595–615 (LNMFQTLKYLAILGSVTFLAG) threads the bilayer. Residues 616–629 (NRMLAQQAIKRTAH) are Cytoplasmic-facing.

This sequence belongs to the SWP1 family. Component of the oligosaccharyltransferase (OST) complex. OST exists in two different complex forms which contain common core subunits RPN1, RPN2, OST48, OST4, DAD1 and TMEM258, either STT3A or STT3B as catalytic subunits, and form-specific accessory subunits. STT3A complex assembly occurs through the formation of 3 subcomplexes. Subcomplex 1 contains RPN1 and TMEM258, subcomplex 2 contains the STT3A-specific subunits STT3A, DC2/OSTC, and KCP2 as well as the core subunit OST4, and subcomplex 3 contains RPN2, DAD1, and OST48. The STT3A complex can form stable complexes with the Sec61 complex or with both the Sec61 and TRAP complexes. Interacts with DDI2. Interacts with TMEM35A/NACHO.

It is found in the endoplasmic reticulum. It localises to the endoplasmic reticulum membrane. It functions in the pathway protein modification; protein glycosylation. Its function is as follows. Subunit of the oligosaccharyl transferase (OST) complex that catalyzes the initial transfer of a defined glycan (Glc(3)Man(9)GlcNAc(2) in eukaryotes) from the lipid carrier dolichol-pyrophosphate to an asparagine residue within an Asn-X-Ser/Thr consensus motif in nascent polypeptide chains, the first step in protein N-glycosylation. N-glycosylation occurs cotranslationally and the complex associates with the Sec61 complex at the channel-forming translocon complex that mediates protein translocation across the endoplasmic reticulum (ER). All subunits are required for a maximal enzyme activity. The chain is Dolichyl-diphosphooligosaccharide--protein glycosyltransferase subunit 2 from Sus scrofa (Pig).